Here is a 464-residue protein sequence, read N- to C-terminus: Protein ABHD18 (464 aa).

A signal peptide spans 1–24 (MGVSKLDILYRRLLLTKLFIRGWG). An N-linked (GlcNAc...) asparagine glycan is attached at Asn341.

The protein belongs to the AB hydrolase superfamily.

The protein resides in the secreted. This Rattus norvegicus (Rat) protein is Protein ABHD18.